The chain runs to 158 residues: UPF0758 protein VC_1786 (158 aa).

The region spanning 37-158 (TFARTENTTE…SVSFAERGWL (122 aa)) is the MPN domain. Zn(2+) contacts are provided by H108, H110, and D121. Residues 108 to 121 (HNHPSGDPEPSQAD) carry the JAMM motif motif.

Belongs to the UPF0758 family.

In Vibrio cholerae serotype O1 (strain ATCC 39315 / El Tor Inaba N16961), this protein is UPF0758 protein VC_1786.